Here is a 203-residue protein sequence, read N- to C-terminus: Ribosomal RNA large subunit methyltransferase E (203 aa).

Glycine 60, tryptophan 62, aspartate 79, aspartate 95, and aspartate 119 together coordinate S-adenosyl-L-methionine. The active-site Proton acceptor is lysine 159.

Belongs to the class I-like SAM-binding methyltransferase superfamily. RNA methyltransferase RlmE family.

The protein resides in the cytoplasm. The enzyme catalyses uridine(2552) in 23S rRNA + S-adenosyl-L-methionine = 2'-O-methyluridine(2552) in 23S rRNA + S-adenosyl-L-homocysteine + H(+). Functionally, specifically methylates the uridine in position 2552 of 23S rRNA at the 2'-O position of the ribose in the fully assembled 50S ribosomal subunit. In Pelagibacter ubique (strain HTCC1062), this protein is Ribosomal RNA large subunit methyltransferase E.